Reading from the N-terminus, the 229-residue chain is tRNA (guanine-N(7)-)-methyltransferase (229 aa).

S-adenosyl-L-methionine-binding residues include glutamate 62, glutamate 87, aspartate 114, and aspartate 137. The active site involves aspartate 137. Residue lysine 141 participates in substrate binding. An interaction with RNA region spans residues 143 to 148; the sequence is KHNKRR. Residues aspartate 173 and 208-211 each bind substrate; that span reads TKFE.

This sequence belongs to the class I-like SAM-binding methyltransferase superfamily. TrmB family.

The enzyme catalyses guanosine(46) in tRNA + S-adenosyl-L-methionine = N(7)-methylguanosine(46) in tRNA + S-adenosyl-L-homocysteine. It functions in the pathway tRNA modification; N(7)-methylguanine-tRNA biosynthesis. Catalyzes the formation of N(7)-methylguanine at position 46 (m7G46) in tRNA. The polypeptide is tRNA (guanine-N(7)-)-methyltransferase (Francisella tularensis subsp. novicida (strain U112)).